The following is a 433-amino-acid chain: Xylose isomerase (433 aa).

Catalysis depends on residues H99 and D102. The Mg(2+) site is built by E230, E266, H269, D294, D305, D307, and D337.

Belongs to the xylose isomerase family. Homotetramer. Mg(2+) is required as a cofactor.

The protein resides in the cytoplasm. The enzyme catalyses alpha-D-xylose = alpha-D-xylulofuranose. This Cereibacter sphaeroides (strain ATCC 17025 / ATH 2.4.3) (Rhodobacter sphaeroides) protein is Xylose isomerase.